A 110-amino-acid polypeptide reads, in one-letter code: UPF0122 protein lwe1821 (110 aa).

It belongs to the UPF0122 family.

In terms of biological role, might take part in the signal recognition particle (SRP) pathway. This is inferred from the conservation of its genetic proximity to ftsY/ffh. May be a regulatory protein. The polypeptide is UPF0122 protein lwe1821 (Listeria welshimeri serovar 6b (strain ATCC 35897 / DSM 20650 / CCUG 15529 / CIP 8149 / NCTC 11857 / SLCC 5334 / V8)).